Here is a 517-residue protein sequence, read N- to C-terminus: ATP synthase subunit alpha (517 aa).

Gly-174–Thr-181 provides a ligand contact to ATP.

It belongs to the ATPase alpha/beta chains family. F-type ATPases have 2 components, CF(1) - the catalytic core - and CF(0) - the membrane proton channel. CF(1) has five subunits: alpha(3), beta(3), gamma(1), delta(1), epsilon(1). CF(0) has three main subunits: a(1), b(2) and c(9-12). The alpha and beta chains form an alternating ring which encloses part of the gamma chain. CF(1) is attached to CF(0) by a central stalk formed by the gamma and epsilon chains, while a peripheral stalk is formed by the delta and b chains.

It is found in the cell inner membrane. The catalysed reaction is ATP + H2O + 4 H(+)(in) = ADP + phosphate + 5 H(+)(out). Functionally, produces ATP from ADP in the presence of a proton gradient across the membrane. The alpha chain is a regulatory subunit. The protein is ATP synthase subunit alpha of Variovorax paradoxus (strain S110).